The chain runs to 221 residues: Intraflagellar transport-associated protein (221 aa).

Ser-59 is subject to Phosphoserine.

Interacts with IFT122; the interaction associates IFTAP with IFT-A complex.

In terms of biological role, seems to play a role in ciliary BBSome localization, maybe through interaction with IFT-A complex. This is Intraflagellar transport-associated protein from Homo sapiens (Human).